The chain runs to 68 residues: Large ribosomal subunit protein eL24 (68 aa).

The Zn(2+) site is built by C7, C10, C33, and C37. A C4-type zinc finger spans residues 7 to 37 (CSYCGREFEPGTGKMFVRNDGRVLFFCSSKC).

The protein belongs to the eukaryotic ribosomal protein eL24 family. Part of the 50S ribosomal subunit. Forms a cluster with proteins L3 and L14. Requires Zn(2+) as cofactor.

In terms of biological role, binds to the 23S rRNA. This Thermococcus gammatolerans (strain DSM 15229 / JCM 11827 / EJ3) protein is Large ribosomal subunit protein eL24.